Consider the following 63-residue polypeptide: Male-specific sperm protein Mst84Da (63 aa).

The protein belongs to the MST(3)CGP family. As to expression, testis.

In Drosophila melanogaster (Fruit fly), this protein is Male-specific sperm protein Mst84Da (Mst84Da).